The chain runs to 577 residues: Arginine--tRNA ligase (577 aa).

The 'HIGH' region motif lies at 132-142; it reads ANPTGPLHVGH.

The protein belongs to the class-I aminoacyl-tRNA synthetase family. As to quaternary structure, monomer.

The protein resides in the cytoplasm. The enzyme catalyses tRNA(Arg) + L-arginine + ATP = L-arginyl-tRNA(Arg) + AMP + diphosphate. The protein is Arginine--tRNA ligase of Pelagibacter ubique (strain HTCC1062).